Consider the following 81-residue polypeptide: Acyl carrier protein (81 aa).

The region spanning 4 to 79 is the Carrier domain; sequence DEVYSRVRKI…DAVNYILSKK (76 aa). Position 39 is an O-(pantetheine 4'-phosphoryl)serine (Ser-39).

It belongs to the acyl carrier protein (ACP) family. In terms of processing, 4'-phosphopantetheine is transferred from CoA to a specific serine of apo-ACP by AcpS. This modification is essential for activity because fatty acids are bound in thioester linkage to the sulfhydryl of the prosthetic group.

The protein localises to the cytoplasm. It functions in the pathway lipid metabolism; fatty acid biosynthesis. In terms of biological role, carrier of the growing fatty acid chain in fatty acid biosynthesis. The polypeptide is Acyl carrier protein (Synechococcus sp. (strain JA-3-3Ab) (Cyanobacteria bacterium Yellowstone A-Prime)).